The sequence spans 90 residues: Small ribosomal subunit protein bS20 (90 aa).

The segment at 1–25 is disordered; it reads MANSPSAKKRAKQAEKRRSHNASLR. The span at 7–20 shows a compositional bias: basic residues; it reads AKKRAKQAEKRRSH.

Belongs to the bacterial ribosomal protein bS20 family.

Functionally, binds directly to 16S ribosomal RNA. The polypeptide is Small ribosomal subunit protein bS20 (Pseudomonas fluorescens (strain Pf0-1)).